Here is a 322-residue protein sequence, read N- to C-terminus: MSLPHAVTTALQHQQHQKQLQESSSDAWTNKCVDYVERIIRFYRTNDMSHLTPQMIMLINTIRDLCVESHPISVNVVKRFDSDENLIKHYSRLRKELGGSEVAENIFQPSFVYNVLPSYAQKFYNKGAENVSGDSVSEAAHELGEALQYQIAEAVASNTPIPLPVRHQLVNTYITLLLQRANIPPNVQDAVSSRKYPTLNIINDLINNVIDDVFTGVYGNYYYYVLNEKNRARIVTLKENIGFLAPLSASTDIFQYIANLATRAGKRPSLFQGATFLNAPSSNGSNVEQNRTSCQQSLTELAFQNEALRRYIFQKLSYKQNY.

Residues Asn-130, Asn-283, and Asn-290 are each glycosylated (N-linked (GlcNAc...) asparagine; by host).

It belongs to the baculoviridae gp41 family.

It localises to the virion. The chain is Structural glycoprotein p40 (P40) from Heliothis zea nuclear polyhedrosis virus (HzSNPV).